A 250-amino-acid polypeptide reads, in one-letter code: Probable phosphatase VIBHAR_04983 (250 aa).

The Zn(2+) site is built by His-8, His-10, His-16, His-41, Glu-74, His-102, His-132, Asp-194, and His-196.

It belongs to the PHP family. The cofactor is Zn(2+).

This is Probable phosphatase VIBHAR_04983 from Vibrio campbellii (strain ATCC BAA-1116).